The following is a 355-amino-acid chain: Phenylalanine--tRNA ligase alpha subunit (355 aa).

Position 273 (glutamate 273) interacts with Mg(2+).

Belongs to the class-II aminoacyl-tRNA synthetase family. Phe-tRNA synthetase alpha subunit type 1 subfamily. As to quaternary structure, tetramer of two alpha and two beta subunits. The cofactor is Mg(2+).

The protein resides in the cytoplasm. It catalyses the reaction tRNA(Phe) + L-phenylalanine + ATP = L-phenylalanyl-tRNA(Phe) + AMP + diphosphate + H(+). This is Phenylalanine--tRNA ligase alpha subunit from Bifidobacterium longum subsp. infantis (strain ATCC 15697 / DSM 20088 / JCM 1222 / NCTC 11817 / S12).